The following is a 281-amino-acid chain: 2-C-methyl-D-erythritol 4-phosphate cytidylyltransferase (281 aa).

It belongs to the IspD/TarI cytidylyltransferase family. IspD subfamily.

It carries out the reaction 2-C-methyl-D-erythritol 4-phosphate + CTP + H(+) = 4-CDP-2-C-methyl-D-erythritol + diphosphate. It functions in the pathway isoprenoid biosynthesis; isopentenyl diphosphate biosynthesis via DXP pathway; isopentenyl diphosphate from 1-deoxy-D-xylulose 5-phosphate: step 2/6. Catalyzes the formation of 4-diphosphocytidyl-2-C-methyl-D-erythritol from CTP and 2-C-methyl-D-erythritol 4-phosphate (MEP). The chain is 2-C-methyl-D-erythritol 4-phosphate cytidylyltransferase from Psychrobacter arcticus (strain DSM 17307 / VKM B-2377 / 273-4).